The primary structure comprises 249 residues: Vacuolar iron transporter 1 (249 aa).

Topologically, residues methionine 1–aspartate 36 are cytoplasmic. A helical transmembrane segment spans residues isoleucine 37–glycine 57. Residues alanine 58–serine 63 lie on the Vacuolar side of the membrane. The chain crosses the membrane as a helical span at residues isoleucine 64–glycine 84. The Cytoplasmic segment spans residues tyrosine 85–threonine 170. Positions serine 90–leucine 165 are cytoplasmic metal binding domain (MBD). Glutamate 102, glutamate 105, glutamate 113, glutamate 116, methionine 149, and glutamate 153 together coordinate Fe cation. Residues isoleucine 171–valine 191 form a helical membrane-spanning segment. Topologically, residues alanine 192–lysine 194 are vacuolar. The chain crosses the membrane as a helical span at residues alanine 195–glycine 215. The Cytoplasmic segment spans residues tyrosine 216–alanine 226. Residues leucine 227–valine 247 traverse the membrane as a helical segment. The Vacuolar segment spans residues glutamine 248–serine 249.

This sequence belongs to the CCC1 family. As to quaternary structure, homodimer. The dimeric interaction is mediated by both the transmembrane domains (TMDs) and the cytoplasmic metal binding domain (MBD).

It is found in the vacuole membrane. It catalyses the reaction Fe(2+)(in) = Fe(2+)(out). Its activity is regulated as follows. Transport of iron ions is inhibited by zinc ions. Its function is as follows. Vacuolar iron transporter involved in the transfer of iron ions from the cytosol to the vacuole for intracellular iron storage. Can transport cobalt ions from the cytosol to the vacuole. This Eucalyptus grandis (Flooded gum) protein is Vacuolar iron transporter 1.